Here is a 474-residue protein sequence, read N- to C-terminus: tRNA-2-methylthio-N(6)-dimethylallyladenosine synthase (474 aa).

An MTTase N-terminal domain is found at 3–120 (KKLHIKTWGC…LPDMIDQVRR (118 aa)). Cysteine 12, cysteine 49, cysteine 83, cysteine 157, cysteine 161, and cysteine 164 together coordinate [4Fe-4S] cluster. A Radical SAM core domain is found at 143-375 (RAEGPTAFVS…QDRITQQAMR (233 aa)). The region spanning 378-441 (RHMMGTVQRI…TNSLRGKFIR (64 aa)) is the TRAM domain.

This sequence belongs to the methylthiotransferase family. MiaB subfamily. As to quaternary structure, monomer. It depends on [4Fe-4S] cluster as a cofactor.

The protein localises to the cytoplasm. The enzyme catalyses N(6)-dimethylallyladenosine(37) in tRNA + (sulfur carrier)-SH + AH2 + 2 S-adenosyl-L-methionine = 2-methylsulfanyl-N(6)-dimethylallyladenosine(37) in tRNA + (sulfur carrier)-H + 5'-deoxyadenosine + L-methionine + A + S-adenosyl-L-homocysteine + 2 H(+). Functionally, catalyzes the methylthiolation of N6-(dimethylallyl)adenosine (i(6)A), leading to the formation of 2-methylthio-N6-(dimethylallyl)adenosine (ms(2)i(6)A) at position 37 in tRNAs that read codons beginning with uridine. This Shewanella sp. (strain ANA-3) protein is tRNA-2-methylthio-N(6)-dimethylallyladenosine synthase.